The following is a 574-amino-acid chain: Proline--tRNA ligase (574 aa).

It belongs to the class-II aminoacyl-tRNA synthetase family. ProS type 1 subfamily. Homodimer.

The protein localises to the cytoplasm. It catalyses the reaction tRNA(Pro) + L-proline + ATP = L-prolyl-tRNA(Pro) + AMP + diphosphate. Catalyzes the attachment of proline to tRNA(Pro) in a two-step reaction: proline is first activated by ATP to form Pro-AMP and then transferred to the acceptor end of tRNA(Pro). As ProRS can inadvertently accommodate and process non-cognate amino acids such as alanine and cysteine, to avoid such errors it has two additional distinct editing activities against alanine. One activity is designated as 'pretransfer' editing and involves the tRNA(Pro)-independent hydrolysis of activated Ala-AMP. The other activity is designated 'posttransfer' editing and involves deacylation of mischarged Ala-tRNA(Pro). The misacylated Cys-tRNA(Pro) is not edited by ProRS. The polypeptide is Proline--tRNA ligase (Nitratidesulfovibrio vulgaris (strain ATCC 29579 / DSM 644 / CCUG 34227 / NCIMB 8303 / VKM B-1760 / Hildenborough) (Desulfovibrio vulgaris)).